We begin with the raw amino-acid sequence, 603 residues long: 65-kDa microtubule-associated protein 7 (603 aa).

Coiled coils occupy residues 48–79 (KECLEIYRRKVDEAANSKAQLHQSLVSIEAEI), 131–186 (DIKA…EKSD), and 468–502 (RLVSILEDYKLTRKQQEEEKRRYRDQKKMQDLLIK). A disordered region spans residues 501–559 (IKRRESIYGSKPSPRRSNSVRKTNGYNGDASVPPTPRRNSAGATNNDIMTTPRSYSSHR). S513 carries the post-translational modification Phosphoserine. Composition is skewed to polar residues over residues 515 to 526 (RRSNSVRKTNGY) and 537 to 559 (RRNSAGATNNDIMTTPRSYSSHR). Residue S599 is modified to Phosphoserine.

Belongs to the MAP65/ASE1 family. Forms dimer. Binds to microtubules (MT).

It localises to the nucleus. The protein resides in the cytoplasm. It is found in the cytoskeleton. The protein localises to the spindle pole. The polypeptide is 65-kDa microtubule-associated protein 7 (MAP65-7) (Arabidopsis thaliana (Mouse-ear cress)).